The primary structure comprises 155 residues: Ribosomal RNA large subunit methyltransferase H (155 aa).

Residues L73, G104, and 123 to 128 (LSPLTL) each bind S-adenosyl-L-methionine.

The protein belongs to the RNA methyltransferase RlmH family. Homodimer.

It localises to the cytoplasm. The catalysed reaction is pseudouridine(1915) in 23S rRNA + S-adenosyl-L-methionine = N(3)-methylpseudouridine(1915) in 23S rRNA + S-adenosyl-L-homocysteine + H(+). Specifically methylates the pseudouridine at position 1915 (m3Psi1915) in 23S rRNA. This is Ribosomal RNA large subunit methyltransferase H from Pseudomonas aeruginosa (strain UCBPP-PA14).